We begin with the raw amino-acid sequence, 470 residues long: Glutathione reductase (470 aa).

FAD-binding residues include S16 and G17. Residue S16 coordinates glutathione. A glutathione-binding site is contributed by R23. Residues E36, T43, C44, and K52 each coordinate FAD. Cysteines 44 and 49 form a disulfide. Residue Y104 participates in glutathione binding. Residue A120 coordinates FAD. Residues G190, I193, E196, R213, and R219 each contribute to the NADP(+) site. T228 serves as a coordination point for glutathione. G280 contacts NADP(+). D321 is a binding site for FAD. Residue E327 participates in NADP(+) binding. An FAD-binding site is contributed by T329. Glutathione is bound at residue R337. An NADP(+)-binding site is contributed by A362. Glutathione is bound at residue K412. H459 provides a ligand contact to FAD. H459 acts as the Proton acceptor in catalysis.

This sequence belongs to the class-I pyridine nucleotide-disulfide oxidoreductase family. In terms of assembly, homodimer. FAD serves as cofactor.

It is found in the cytoplasm. The protein resides in the mitochondrion. The enzyme catalyses 2 glutathione + NADP(+) = glutathione disulfide + NADPH + H(+). Catalyzes the reduction of glutathione disulfide (GSSG) to reduced glutathione (GSH). Constitutes the major mechanism to maintain a high GSH:GSSG ratio in the cytosol. This is Glutathione reductase (GLR1) from Yarrowia lipolytica (strain CLIB 122 / E 150) (Yeast).